The chain runs to 458 residues: Adenylosuccinate synthetase (458 aa).

Residues 17 to 23 (GDEGKGK) and 45 to 47 (GHT) each bind GTP. Aspartate 18 acts as the Proton acceptor in catalysis. Mg(2+) contacts are provided by aspartate 18 and glycine 45. IMP-binding positions include 18 to 21 (DEGK), 43 to 46 (NAGH), threonine 137, arginine 151, glutamine 247, threonine 262, and arginine 330. Histidine 46 (proton donor) is an active-site residue. 326-332 (VTTGRSR) serves as a coordination point for substrate. GTP contacts are provided by residues arginine 332, 358–360 (KLD), and 440–442 (STS).

The protein belongs to the adenylosuccinate synthetase family. As to quaternary structure, homodimer. Mg(2+) is required as a cofactor.

The protein localises to the cytoplasm. The enzyme catalyses IMP + L-aspartate + GTP = N(6)-(1,2-dicarboxyethyl)-AMP + GDP + phosphate + 2 H(+). It participates in purine metabolism; AMP biosynthesis via de novo pathway; AMP from IMP: step 1/2. Its function is as follows. Plays an important role in the de novo pathway of purine nucleotide biosynthesis. Catalyzes the first committed step in the biosynthesis of AMP from IMP. The sequence is that of Adenylosuccinate synthetase from Verminephrobacter eiseniae (strain EF01-2).